Here is a 100-residue protein sequence, read N- to C-terminus: Large ribosomal subunit protein bL27 (100 aa).

Residues 1–13 constitute a propeptide that is removed on maturation; the sequence is MNKLYWLTDLQLF. The tract at residues 17 to 39 is disordered; it reads KGVGSSKNGRDSNPKYLGAKLGD.

The protein belongs to the bacterial ribosomal protein bL27 family. The N-terminus is cleaved by ribosomal processing cysteine protease Prp.

The protein is Large ribosomal subunit protein bL27 of Ureaplasma parvum serovar 3 (strain ATCC 700970).